The sequence spans 539 residues: MTKYIFVTGGVVSSLGKGITASSIGRLLKNRGLKVTMQKFDPYINIDPGTMNPYQHGEVFVTDDGTEADLDLGHYERLVDVRTSKYSNVTTGKIYQEVLQRERRGDYHGGTVQVIPHVTNMIKEKVMRAAQMTDTDVVISEIGGTVGDMESTPFMEAIRQMRREVGSENVMYVHVTFVPYLRAAKELKSKPTQQSVSMLRSIGIQPNMLVLRSEMPVPQEMKDKISTFTDVPVDYIVESLDAPSLFDVPLSYQEQGVDQKVVDFLHIDSPKPVADMDEWRRMDERAKNLKYKTKITLVGKYVELEDAYISVTDALQHAGYLYNSKIEVEKIQAEDITEDNVAELLKDTQGLIVPGGFGIRGLDGMITSIKYAREHDIPFLGICLGMQMASVEFARNVLHLEDANSAEAEPNCKNNIIDLMADQRDQEKIGGTLRLGLYPAMLKAGTKTRECYDGQEVIQERHRHRYEFYNKYREDFEKAGMTFSGVSPDNHLVEIVEITDKKFFVAAQYHPEFLSRPNRPEGLFKGFIGAASGLQVDKF.

The interval 1–267 (MTKYIFVTGG…DQKVVDFLHI (267 aa)) is amidoligase domain. CTP is bound at residue Ser13. UTP is bound at residue Ser13. Residue 14 to 19 (SLGKGI) coordinates ATP. Tyr54 lines the L-glutamine pocket. Asp71 serves as a coordination point for ATP. The Mg(2+) site is built by Asp71 and Glu141. Residues 148–150 (DME), 188–193 (KSKPTQ), and Lys224 contribute to the CTP site. Residues 188 to 193 (KSKPTQ) and Lys224 contribute to the UTP site. Positions 294–537 (KITLVGKYVE…IGAASGLQVD (244 aa)) constitute a Glutamine amidotransferase type-1 domain. Residue Gly356 participates in L-glutamine binding. The active-site Nucleophile; for glutamine hydrolysis is the Cys383. Residues 384–387 (LGMQ), Glu407, and Arg465 contribute to the L-glutamine site. Residues His510 and Glu512 contribute to the active site.

The protein belongs to the CTP synthase family. In terms of assembly, homotetramer.

The enzyme catalyses UTP + L-glutamine + ATP + H2O = CTP + L-glutamate + ADP + phosphate + 2 H(+). It carries out the reaction L-glutamine + H2O = L-glutamate + NH4(+). It catalyses the reaction UTP + NH4(+) + ATP = CTP + ADP + phosphate + 2 H(+). Its pathway is pyrimidine metabolism; CTP biosynthesis via de novo pathway; CTP from UDP: step 2/2. With respect to regulation, allosterically activated by GTP, when glutamine is the substrate; GTP has no effect on the reaction when ammonia is the substrate. The allosteric effector GTP functions by stabilizing the protein conformation that binds the tetrahedral intermediate(s) formed during glutamine hydrolysis. Inhibited by the product CTP, via allosteric rather than competitive inhibition. Its function is as follows. Catalyzes the ATP-dependent amination of UTP to CTP with either L-glutamine or ammonia as the source of nitrogen. Regulates intracellular CTP levels through interactions with the four ribonucleotide triphosphates. This Lactobacillus delbrueckii subsp. bulgaricus (strain ATCC BAA-365 / Lb-18) protein is CTP synthase.